The sequence spans 211 residues: Thiamine-phosphate synthase (211 aa).

Residues 37–41 (QLRIK) and asparagine 69 contribute to the 4-amino-2-methyl-5-(diphosphooxymethyl)pyrimidine site. Residues aspartate 70 and aspartate 89 each contribute to the Mg(2+) site. Serine 108 provides a ligand contact to 4-amino-2-methyl-5-(diphosphooxymethyl)pyrimidine. A 2-[(2R,5Z)-2-carboxy-4-methylthiazol-5(2H)-ylidene]ethyl phosphate-binding site is contributed by 134–136 (TQT). Residue lysine 137 coordinates 4-amino-2-methyl-5-(diphosphooxymethyl)pyrimidine. Residues glycine 166 and 186–187 (IS) each bind 2-[(2R,5Z)-2-carboxy-4-methylthiazol-5(2H)-ylidene]ethyl phosphate.

Belongs to the thiamine-phosphate synthase family. It depends on Mg(2+) as a cofactor.

It catalyses the reaction 2-[(2R,5Z)-2-carboxy-4-methylthiazol-5(2H)-ylidene]ethyl phosphate + 4-amino-2-methyl-5-(diphosphooxymethyl)pyrimidine + 2 H(+) = thiamine phosphate + CO2 + diphosphate. It carries out the reaction 2-(2-carboxy-4-methylthiazol-5-yl)ethyl phosphate + 4-amino-2-methyl-5-(diphosphooxymethyl)pyrimidine + 2 H(+) = thiamine phosphate + CO2 + diphosphate. The catalysed reaction is 4-methyl-5-(2-phosphooxyethyl)-thiazole + 4-amino-2-methyl-5-(diphosphooxymethyl)pyrimidine + H(+) = thiamine phosphate + diphosphate. It functions in the pathway cofactor biosynthesis; thiamine diphosphate biosynthesis; thiamine phosphate from 4-amino-2-methyl-5-diphosphomethylpyrimidine and 4-methyl-5-(2-phosphoethyl)-thiazole: step 1/1. In terms of biological role, condenses 4-methyl-5-(beta-hydroxyethyl)thiazole monophosphate (THZ-P) and 2-methyl-4-amino-5-hydroxymethyl pyrimidine pyrophosphate (HMP-PP) to form thiamine monophosphate (TMP). This Shigella boydii serotype 4 (strain Sb227) protein is Thiamine-phosphate synthase.